An 835-amino-acid polypeptide reads, in one-letter code: Protein VP3 (835 aa).

The interval 171 to 245 (KKIKERMTTS…KDTIKLKQER (75 aa)) is N7-methyltransferase activity. The tract at residues 246–428 (WLGKRLSQFD…KNIKRFIPKG (183 aa)) is 2'-O-methyltransferase activity. An N7-methyltransferase activity region spans residues 429-555 (VLYSYINNVI…NHLFILSGTN (127 aa)). The GTase/RTPase activity stretch occupies residues 556 to 692 (KYFKLDQFAN…DYINKVYSIT (137 aa)). Residues 693-835 (YADDPNYFIG…KGDTVFDMTE (143 aa)) are 2'-5'-phosphodiesterase activity. Residues His-718, Thr-720, His-797, and Thr-799 each act as for 2'-5'-phosphodiesterase activity in the active site.

It belongs to the rotavirus VP3 family. As to quaternary structure, interacts with VP1. Interacts with VP2.

Its subcellular location is the virion. It catalyses the reaction a 5'-end diphospho-ribonucleoside in mRNA + GTP + H(+) = a 5'-end (5'-triphosphoguanosine)-ribonucleoside in mRNA + diphosphate. The catalysed reaction is a 5'-end (5'-triphosphoguanosine)-ribonucleoside in mRNA + S-adenosyl-L-methionine = a 5'-end (N(7)-methyl 5'-triphosphoguanosine)-ribonucleoside in mRNA + S-adenosyl-L-homocysteine. It carries out the reaction 5'-triphosphoadenylyl-(2'-&gt;5')-adenylyl-(2'-&gt;5')-adenosine + 2 H2O = 2 AMP + ATP + 2 H(+). Multifunctional enzyme involved in mRNA capping. Catalyzes the formation of the 5' cap structure on the viral plus-strand transcripts. Specifically binds to GTP and displays guanylyltransferase and methyltransferase activities. Has affinity for ssRNA but not for dsRNA. Capping activity is non-specific and caps RNAs that initiate with either a G or an A residue. Together with VP1 polymerase, forms a VP1-VP3 complex positioned near the channels situated at each of the five-fold vertices of the core. Following infection, the outermost layer of the virus is lost, leaving a double-layered particle (DLP) made up of the core and VP6 shell. VP1 then catalyzes the transcription of fully conservative plus-strand genomic RNAs that are capped by VP3 and extruded through the DLP's channels into the cytoplasm where they function as mRNAs for translation of viral proteins. DLPs probably have an RNA triphosphatase activity as well, whereas open cores do not. Its function is as follows. Counteracts the host innate immune response thanks to its phosphodiesterase that degrades the 5'-triphosphorylated, 2'-5' linked adenylate oligomers produced by the host cell IFN-inducible 2',5'-oligoadenylate synthetase (OAS). The host RNaseL is therefore not activated. This chain is Protein VP3, found in Bos taurus (Bovine).